We begin with the raw amino-acid sequence, 377 residues long: tRNA(Met) cytidine acetate ligase (377 aa).

ATP contacts are provided by residues 7-20 (ITEY…HLFH), G100, N153, and R178.

It belongs to the TmcAL family.

It is found in the cytoplasm. It carries out the reaction cytidine(34) in elongator tRNA(Met) + acetate + ATP = N(4)-acetylcytidine(34) in elongator tRNA(Met) + AMP + diphosphate. Functionally, catalyzes the formation of N(4)-acetylcytidine (ac(4)C) at the wobble position of elongator tRNA(Met), using acetate and ATP as substrates. First activates an acetate ion to form acetyladenylate (Ac-AMP) and then transfers the acetyl group to tRNA to form ac(4)C34. The polypeptide is tRNA(Met) cytidine acetate ligase (Staphylococcus epidermidis (strain ATCC 35984 / DSM 28319 / BCRC 17069 / CCUG 31568 / BM 3577 / RP62A)).